A 671-amino-acid polypeptide reads, in one-letter code: Polyadenylate-binding protein 8 (671 aa).

RRM domains are found at residues Thr-45–Arg-123, Gly-133–His-210, Thr-224–Lys-301, and Ser-327–Arg-404. The interval Leu-467–Pro-526 is disordered. Low complexity-rich tracts occupy residues Met-483 to Arg-501 and Gly-508 to His-525. The 78-residue stretch at Pro-573–Gln-650 folds into the PABC domain.

It belongs to the polyadenylate-binding protein type-1 family. In terms of assembly, interacts with ERD15/CID1. Interacts with Turnip mosaic virus (TuMV) VPg-Pro and RNA-dependent RNA polymerase (RdRp). In terms of tissue distribution, expressed predominantly in immature flowers.

The protein resides in the cytoplasm. Its subcellular location is the nucleus. Functionally, binds the poly(A) tail of mRNA. Appears to be an important mediator of the multiple roles of the poly(A) tail in mRNA biogenesis, stability and translation. During infection with potyvirus TuMV, acts as a potential integral component of the viral replicase complex that could play an important role in the regulation of potyviral RNA-dependent RNA polymerase (RdRp). The protein is Polyadenylate-binding protein 8 (PAB8) of Arabidopsis thaliana (Mouse-ear cress).